The following is a 317-amino-acid chain: Prenyl transferase paxC (317 aa).

Substrate-binding residues include lysine 53 and histidine 86. Positions 93 and 97 each coordinate Mg(2+). Substrate-binding residues include arginine 102, lysine 186, threonine 187, glutamine 216, asparagine 223, and lysine 233.

It belongs to the FPP/GGPP synthase family.

The protein operates within secondary metabolite biosynthesis. Its function is as follows. Prenyl transferase; part of the gene cluster that mediates the biosynthesis of paxalline, a mycotoxin that acts as an inhibitor of mammalian maxi-K channels. PaxG, the geranylgeranyl diphosphate (GGPP) synthase is proposed to catalyze the first step in paxilline biosynthesis. Condensation of indole-3-glycerol phosphate with GGPP by paxC then forms 3-geranylgeranylindole (3-GGI), followed by epoxidation and cyclization of this intermediate (by paxM and paxB) to form paspaline. Paspaline is subsequently converted to 13-desoxypaxilline by paxP, the latter being then converted to paxilline by paxQ. Finally paxilline can be mono- and di-prenylated by paxD. The polypeptide is Prenyl transferase paxC (Penicillium paxilli).